We begin with the raw amino-acid sequence, 867 residues long: Mitochondrial escape protein 2 (867 aa).

The transit peptide at Met-1–Tyr-25 directs the protein to the mitochondrion. Over Ser-26–Lys-279 the chain is Mitochondrial matrix. The region spanning Gly-179–Ile-264 is the RRM domain. The helical transmembrane segment at Ile-280–Ile-300 threads the bilayer. The Mitochondrial intermembrane segment spans residues Arg-301–Phe-867. The stretch at Ile-795–Ser-852 forms a coiled coil.

This sequence belongs to the YME2 family.

The protein resides in the mitochondrion inner membrane. Plays a role in maintaining the mitochondrial genome and in controlling the mtDNA escape. Involved in the regulation of mtDNA nucleotide structure and number. May have a dispensable role in early maturation of pre-rRNA. This Candida albicans (strain SC5314 / ATCC MYA-2876) (Yeast) protein is Mitochondrial escape protein 2 (PRP13).